Here is a 239-residue protein sequence, read N- to C-terminus: Carboxy-S-adenosyl-L-methionine synthase (239 aa).

S-adenosyl-L-methionine is bound by residues tyrosine 35, 64-66, 88-89, and arginine 195; these read GCS and DN.

Belongs to the class I-like SAM-binding methyltransferase superfamily. Cx-SAM synthase family. Homodimer.

The enzyme catalyses prephenate + S-adenosyl-L-methionine = carboxy-S-adenosyl-L-methionine + 3-phenylpyruvate + H2O. In terms of biological role, catalyzes the conversion of S-adenosyl-L-methionine (SAM) to carboxy-S-adenosyl-L-methionine (Cx-SAM). The chain is Carboxy-S-adenosyl-L-methionine synthase from Helicobacter pylori (strain HPAG1).